Reading from the N-terminus, the 289-residue chain is Protoheme IX farnesyltransferase 2 (289 aa).

9 consecutive transmembrane segments (helical) span residues 4–24, 28–48, 66–86, 99–118, 124–144, 155–175, 199–219, 221–241, and 256–276; these read PGIIFGNLISVAGGFLLAAKG, LVLMLASLVGLSLVVASGCAI, RVTVTGEIAVGNVLAFGLALG, ALALLFAVIGYIVYVGVYSL, SVYGTLVGSFSGAVPPVVGYC, AILLLMFSLWQMPHSYAIAIF, LHIVLYIAVFALVSALLPLAG, TGIAFMAVTCATSLWWLAMAL, and QVFGFSIITITALSVTMALDF.

It belongs to the UbiA prenyltransferase family. Protoheme IX farnesyltransferase subfamily.

It localises to the cell inner membrane. The catalysed reaction is heme b + (2E,6E)-farnesyl diphosphate + H2O = Fe(II)-heme o + diphosphate. It functions in the pathway porphyrin-containing compound metabolism; heme O biosynthesis; heme O from protoheme: step 1/1. In terms of biological role, converts heme B (protoheme IX) to heme O by substitution of the vinyl group on carbon 2 of heme B porphyrin ring with a hydroxyethyl farnesyl side group. This Shewanella baltica (strain OS195) protein is Protoheme IX farnesyltransferase 2.